The following is a 277-amino-acid chain: Large ribosomal subunit protein uL2 (277 aa).

Positions 211-277 (SRWKGVRPTV…KLIVRGRKKK (67 aa)) are disordered.

It belongs to the universal ribosomal protein uL2 family. As to quaternary structure, part of the 50S ribosomal subunit. Forms a bridge to the 30S subunit in the 70S ribosome.

Its function is as follows. One of the primary rRNA binding proteins. Required for association of the 30S and 50S subunits to form the 70S ribosome, for tRNA binding and peptide bond formation. It has been suggested to have peptidyltransferase activity; this is somewhat controversial. Makes several contacts with the 16S rRNA in the 70S ribosome. The chain is Large ribosomal subunit protein uL2 from Staphylococcus epidermidis (strain ATCC 35984 / DSM 28319 / BCRC 17069 / CCUG 31568 / BM 3577 / RP62A).